Consider the following 719-residue polypeptide: MPTSISTAPLSQGSPPSSLIDYQPQSVPSSSSPPPSTAAAAAAAVVVAVPSSSSPVDLGLPSFTSTSSLITSDVPATTTTPSFTGSVIGSISRRNRRSFAALAREKTSSALANLSSIGSTTNSSLRQSASSGSLQKHSRKASQLSVGEISGFVPLSPPLSDGSGSSEQSSSAPFEPLSAVTEQPNPAAERRRQTIQLVPPISENIPVSPAKMHQTSSRLLRMTEDDRPFTKDFMDLFSTLMVSLKLDSHRVRFTKYDHTFTSEEAINNLGSLKFSQSNRMPDPKDPSRIVTTTTTTTFSMAKEMARSVCQRFVDARFIESVDGKYSHTFPLKGALYQLTPKGINILQRFCQRNGITARHVIDVLESPRNTMQLVNLERDTETDKLSHDRATIEVIFRRFAGQDGPNVKSSVSSSDSDSLSDYSNGLVGVKMARERKVGDKICANTFTGKAAVDWLMDCSTTIEPRETVLIAELFVKYGLITVLQEDRSMPQVENSLVAFQPSKNAIYAITERGQRVCGWLARDKPRDTTTYDSRGIPRDSNNARLNHILQDPALRLLFREFLRFSLCEENLSFYIDVSEFTTQYHKFDKVGHFKKPDAVRETLAAAYGLYNAFLAPGSPCELNIDHALRNSLASRMTKAVGDDDSMLKSLQEVVQLFEMAQTSVFKLMSSDSVPKFLRDPKYSAILQEHDVDDLIGGGRSYSPTPGNVPERSMSRSQRS.

A compositionally biased stretch (polar residues) spans 1–17 (MPTSISTAPLSQGSPPS). 3 disordered regions span residues 1–39 (MPTSISTAPLSQGSPPSSLIDYQPQSVPSSSSPPPSTAA), 117–141 (IGSTTNSSLRQSASSGSLQKHSRKA), and 155–190 (LSPPLSDGSGSSEQSSSAPFEPLSAVTEQPNPAAER). Low complexity-rich tracts occupy residues 123-135 (SSLRQSASSGSLQ) and 158-171 (PLSDGSGSSEQSSS). The interval 214 to 411 (QTSSRLLRMT…QDGPNVKSSV (198 aa)) is fungal-DR. Residues 425–511 (GLVGVKMARE…SKNAIYAITE (87 aa)) form the DEP domain. Residues 540–685 (SNNARLNHIL…FLRDPKYSAI (146 aa)) enclose the RGS domain. Residues 694-719 (LIGGGRSYSPTPGNVPERSMSRSQRS) form a disordered region.

Functionally, required for asexual sporulation and normal colony development. May be involved in brlA activation. Could play a regulatory role in controlling the flug-initiated signal transduction pathway that triggers the asexual reproduction. The polypeptide is Developmental regulator flbA (flbA) (Emericella nidulans (strain FGSC A4 / ATCC 38163 / CBS 112.46 / NRRL 194 / M139) (Aspergillus nidulans)).